The sequence spans 161 residues: MADIKASIDRKANRRGAARLAAVQALYQMEIGGAGINDVFAEFDSHWLGNEVEGDRYLPAEAAFFRDVVAGVVRDQVRIDPLIDDALSKSWPLKRVAAILRAVLRAGSYELEHRKDVPARVVVSEYVDVAHAFVEKDEAGMVNAVLDQIARRFRTGEFARG.

The protein belongs to the NusB family.

Its function is as follows. Involved in transcription antitermination. Required for transcription of ribosomal RNA (rRNA) genes. Binds specifically to the boxA antiterminator sequence of the ribosomal RNA (rrn) operons. The sequence is that of Transcription antitermination protein NusB from Nitrobacter winogradskyi (strain ATCC 25391 / DSM 10237 / CIP 104748 / NCIMB 11846 / Nb-255).